We begin with the raw amino-acid sequence, 366 residues long: Ribosomal RNA large subunit methyltransferase M (366 aa).

S-adenosyl-L-methionine is bound by residues Ser-188, 221–224, Asp-240, Asp-260, and Asp-277; that span reads CPGG. Residue Lys-306 is the Proton acceptor of the active site.

This sequence belongs to the class I-like SAM-binding methyltransferase superfamily. RNA methyltransferase RlmE family. RlmM subfamily. In terms of assembly, monomer.

It is found in the cytoplasm. The catalysed reaction is cytidine(2498) in 23S rRNA + S-adenosyl-L-methionine = 2'-O-methylcytidine(2498) in 23S rRNA + S-adenosyl-L-homocysteine + H(+). In terms of biological role, catalyzes the 2'-O-methylation at nucleotide C2498 in 23S rRNA. This Citrobacter koseri (strain ATCC BAA-895 / CDC 4225-83 / SGSC4696) protein is Ribosomal RNA large subunit methyltransferase M.